Reading from the N-terminus, the 271-residue chain is Orotidine 5'-phosphate decarboxylase (271 aa).

The active-site Proton donor is the lysine 95.

The protein belongs to the OMP decarboxylase family. Type 2 subfamily.

It carries out the reaction orotidine 5'-phosphate + H(+) = UMP + CO2. It functions in the pathway pyrimidine metabolism; UMP biosynthesis via de novo pathway; UMP from orotate: step 2/2. This Janthinobacterium sp. (strain Marseille) (Minibacterium massiliensis) protein is Orotidine 5'-phosphate decarboxylase.